Here is a 399-residue protein sequence, read N- to C-terminus: Subtilisin-like protease 1 (399 aa).

The first 19 residues, 1–19 (MGVFRFISISLAAVSAANA), serve as a signal peptide directing secretion. A propeptide spanning residues 20–116 (AQILSMPHAQ…VEPDTIISVH (97 aa)) is cleaved from the precursor. One can recognise an Inhibitor I9 domain in the interval 34–115 (SYIVMMKDDT…FVEPDTIISV (82 aa)). Residues 126 to 399 (SWGLARISNP…TNVLINNGGA (274 aa)) form the Peptidase S8 domain. Active-site charge relay system residues include aspartate 158 and histidine 190. The tract at residues 175 to 198 (GSNQVNDGDDRDGSGHGTHTSGTM) is disordered. A glycan (N-linked (GlcNAc...) asparagine) is linked at asparagine 251. Over residues 282 to 294 (NDNQDAQSSSPAS) the composition is skewed to polar residues. The tract at residues 282 to 312 (NDNQDAQSSSPASEPSVCTVGSSAEDDSRSS) is disordered. Serine 345 serves as the catalytic Charge relay system.

The protein belongs to the peptidase S8 family.

The protein resides in the secreted. In terms of biological role, secreted subtilisin-like serine protease with keratinolytic activity that contributes to pathogenicity. The chain is Subtilisin-like protease 1 (SUB1) from Arthroderma benhamiae (Trichophyton mentagrophytes).